The chain runs to 380 residues: Succinyl-diaminopimelate desuccinylase (380 aa).

H70 contacts Zn(2+). D72 is a catalytic residue. Position 104 (D104) interacts with Zn(2+). E138 serves as the catalytic Proton acceptor. E139, E167, and H353 together coordinate Zn(2+).

The protein belongs to the peptidase M20A family. DapE subfamily. In terms of assembly, homodimer. It depends on Zn(2+) as a cofactor. The cofactor is Co(2+).

The catalysed reaction is N-succinyl-(2S,6S)-2,6-diaminopimelate + H2O = (2S,6S)-2,6-diaminopimelate + succinate. The protein operates within amino-acid biosynthesis; L-lysine biosynthesis via DAP pathway; LL-2,6-diaminopimelate from (S)-tetrahydrodipicolinate (succinylase route): step 3/3. Its function is as follows. Catalyzes the hydrolysis of N-succinyl-L,L-diaminopimelic acid (SDAP), forming succinate and LL-2,6-diaminopimelate (DAP), an intermediate involved in the bacterial biosynthesis of lysine and meso-diaminopimelic acid, an essential component of bacterial cell walls. The chain is Succinyl-diaminopimelate desuccinylase from Ectopseudomonas mendocina (strain ymp) (Pseudomonas mendocina).